A 284-amino-acid chain; its full sequence is D-tagatose-1,6-bisphosphate aldolase subunit GatY (284 aa).

Asp82 acts as the Proton donor in catalysis. 2 residues coordinate Zn(2+): His83 and His180. Gly181 contacts dihydroxyacetone phosphate. A Zn(2+)-binding site is contributed by His208. Dihydroxyacetone phosphate is bound by residues 209-211 and 230-233; these read GAS and NVAT.

It belongs to the class II fructose-bisphosphate aldolase family. TagBP aldolase GatY subfamily. As to quaternary structure, forms a complex with GatZ. Zn(2+) is required as a cofactor.

The catalysed reaction is D-tagatofuranose 1,6-bisphosphate = D-glyceraldehyde 3-phosphate + dihydroxyacetone phosphate. It functions in the pathway carbohydrate metabolism; D-tagatose 6-phosphate degradation; D-glyceraldehyde 3-phosphate and glycerone phosphate from D-tagatose 6-phosphate: step 2/2. Functionally, catalytic subunit of the tagatose-1,6-bisphosphate aldolase GatYZ, which catalyzes the reversible aldol condensation of dihydroxyacetone phosphate (DHAP or glycerone-phosphate) with glyceraldehyde 3-phosphate (G3P) to produce tagatose 1,6-bisphosphate (TBP). Requires GatZ subunit for full activity and stability. Is involved in the catabolism of galactitol. The sequence is that of D-tagatose-1,6-bisphosphate aldolase subunit GatY (gatY) from Escherichia coli.